The primary structure comprises 275 residues: MNTQLSRTQFQFQPFHLVTPSPWPLLTSFALLILTSAAVMYFNGYANPLGGSGALLVGIGLATTVAAMALWFRDVVAEGTFLGDHTILVQKGITMGVALFIISEVFFFISVFWAFFHSSLSPTVELGAQWPPVGIATINPFELPLLNTILLLSSGATVTYAHHSVIEGNRRGAILGTLMTLIFAVLFTICQGIEYLNAGFTIADGVFGSTFFFSTGFHGVHVIIGTLFIAVAFFRMLSYHLTDHHHLGFEASILYWHFVDVVWLFLFISVYWWGS.

A run of 7 helical transmembrane segments spans residues 22 to 42 (PWPLLTSFALLILTSAAVMYF), 52 to 72 (SGALLVGIGLATTVAAMALWF), 96 to 116 (GVALFIISEVFFFISVFWAFF), 132 to 152 (PVGIATINPFELPLLNTILLL), 173 to 193 (AILGTLMTLIFAVLFTICQGI), 211 to 231 (FFFSTGFHGVHVIIGTLFIAV), and 253 to 273 (ILYWHFVDVVWLFLFISVYWW).

This sequence belongs to the cytochrome c oxidase subunit 3 family. As to quaternary structure, component of the cytochrome c oxidase (complex IV, CIV), a multisubunit enzyme composed of a catalytic core of 3 subunits and several supernumerary subunits. The complex exists as a monomer or a dimer and forms supercomplexes (SCs) in the inner mitochondrial membrane with ubiquinol-cytochrome c oxidoreductase (cytochrome b-c1 complex, complex III, CIII).

It is found in the mitochondrion inner membrane. It carries out the reaction 4 Fe(II)-[cytochrome c] + O2 + 8 H(+)(in) = 4 Fe(III)-[cytochrome c] + 2 H2O + 4 H(+)(out). Functionally, component of the cytochrome c oxidase, the last enzyme in the mitochondrial electron transport chain which drives oxidative phosphorylation. The respiratory chain contains 3 multisubunit complexes succinate dehydrogenase (complex II, CII), ubiquinol-cytochrome c oxidoreductase (cytochrome b-c1 complex, complex III, CIII) and cytochrome c oxidase (complex IV, CIV), that cooperate to transfer electrons derived from NADH and succinate to molecular oxygen, creating an electrochemical gradient over the inner membrane that drives transmembrane transport and the ATP synthase. Cytochrome c oxidase is the component of the respiratory chain that catalyzes the reduction of oxygen to water. Electrons originating from reduced cytochrome c in the intermembrane space (IMS) are transferred via the dinuclear copper A center (CU(A)) of subunit 2 and heme A of subunit 1 to the active site in subunit 1, a binuclear center (BNC) formed by heme A3 and copper B (CU(B)). The BNC reduces molecular oxygen to 2 water molecules using 4 electrons from cytochrome c in the IMS and 4 protons from the mitochondrial matrix. The polypeptide is Cytochrome c oxidase subunit 3 (COX3) (Mycosarcoma maydis (Corn smut fungus)).